We begin with the raw amino-acid sequence, 148 residues long: Endoribonuclease YbeY (148 aa).

Zn(2+) contacts are provided by His102, His106, and His112.

It belongs to the endoribonuclease YbeY family. The cofactor is Zn(2+).

It is found in the cytoplasm. Functionally, single strand-specific metallo-endoribonuclease involved in late-stage 70S ribosome quality control and in maturation of the 3' terminus of the 16S rRNA. The chain is Endoribonuclease YbeY from Phytoplasma mali (strain AT).